We begin with the raw amino-acid sequence, 458 residues long: Argininosuccinate lyase (458 aa).

The protein belongs to the lyase 1 family. Argininosuccinate lyase subfamily.

The protein resides in the cytoplasm. The enzyme catalyses 2-(N(omega)-L-arginino)succinate = fumarate + L-arginine. Its pathway is amino-acid biosynthesis; L-arginine biosynthesis; L-arginine from L-ornithine and carbamoyl phosphate: step 3/3. The chain is Argininosuccinate lyase from Neisseria meningitidis serogroup C (strain 053442).